We begin with the raw amino-acid sequence, 266 residues long: Zinc transport system ATP-binding protein TroB (266 aa).

Positions 11–243 (VQVDDLTLAY…YVQRAYGGRI (233 aa)) constitute an ABC transporter domain. Residue 43 to 50 (GPNGAGKS) coordinates ATP.

It belongs to the ABC transporter superfamily.

Part of an ATP-driven transport system TroABCD for zinc. This Treponema pallidum (strain Nichols) protein is Zinc transport system ATP-binding protein TroB (troB).